We begin with the raw amino-acid sequence, 299 residues long: UDP-N-acetylenolpyruvoylglucosamine reductase (299 aa).

In terms of domain architecture, FAD-binding PCMH-type spans 27–192; that stretch reads KSGGAADWLF…VGATFRGRPG (166 aa). Arg-172 is a catalytic residue. A disordered region spans residues 206-225; the sequence is ASREASQPLRSRTGGSTFKN. A compositionally biased stretch (polar residues) spans 208–224; it reads REASQPLRSRTGGSTFK. Ser-221 functions as the Proton donor in the catalytic mechanism. Glu-291 is a catalytic residue.

This sequence belongs to the MurB family. FAD is required as a cofactor.

Its subcellular location is the cytoplasm. The enzyme catalyses UDP-N-acetyl-alpha-D-muramate + NADP(+) = UDP-N-acetyl-3-O-(1-carboxyvinyl)-alpha-D-glucosamine + NADPH + H(+). The protein operates within cell wall biogenesis; peptidoglycan biosynthesis. Functionally, cell wall formation. The protein is UDP-N-acetylenolpyruvoylglucosamine reductase of Sphingopyxis alaskensis (strain DSM 13593 / LMG 18877 / RB2256) (Sphingomonas alaskensis).